The chain runs to 478 residues: Glutamate--tRNA ligase 1 (478 aa).

The 'HIGH' region signature appears at 10–20; sequence PSPTGFLHIGG. The short motif at 242–246 is the 'KMSKS' region element; sequence KLSKR. Lys-245 is an ATP binding site.

It belongs to the class-I aminoacyl-tRNA synthetase family. Glutamate--tRNA ligase type 1 subfamily. Monomer.

The protein resides in the cytoplasm. The enzyme catalyses tRNA(Glu) + L-glutamate + ATP = L-glutamyl-tRNA(Glu) + AMP + diphosphate. Catalyzes the attachment of glutamate to tRNA(Glu) in a two-step reaction: glutamate is first activated by ATP to form Glu-AMP and then transferred to the acceptor end of tRNA(Glu). This is Glutamate--tRNA ligase 1 from Orientia tsutsugamushi (strain Boryong) (Rickettsia tsutsugamushi).